The chain runs to 312 residues: Ribosomal protein L11 methyltransferase (312 aa).

Residues threonine 160, glycine 181, aspartate 203, and asparagine 246 each coordinate S-adenosyl-L-methionine.

The protein belongs to the methyltransferase superfamily. PrmA family.

It localises to the cytoplasm. It catalyses the reaction L-lysyl-[protein] + 3 S-adenosyl-L-methionine = N(6),N(6),N(6)-trimethyl-L-lysyl-[protein] + 3 S-adenosyl-L-homocysteine + 3 H(+). Methylates ribosomal protein L11. In Staphylococcus haemolyticus (strain JCSC1435), this protein is Ribosomal protein L11 methyltransferase.